The chain runs to 188 residues: ATP synthase subunit delta (188 aa).

It belongs to the ATPase delta chain family. As to quaternary structure, F-type ATPases have 2 components, F(1) - the catalytic core - and F(0) - the membrane proton channel. F(1) has five subunits: alpha(3), beta(3), gamma(1), delta(1), epsilon(1). F(0) has three main subunits: a(1), b(2) and c(10-14). The alpha and beta chains form an alternating ring which encloses part of the gamma chain. F(1) is attached to F(0) by a central stalk formed by the gamma and epsilon chains, while a peripheral stalk is formed by the delta and b chains.

It localises to the cell inner membrane. Its function is as follows. F(1)F(0) ATP synthase produces ATP from ADP in the presence of a proton or sodium gradient. F-type ATPases consist of two structural domains, F(1) containing the extramembraneous catalytic core and F(0) containing the membrane proton channel, linked together by a central stalk and a peripheral stalk. During catalysis, ATP synthesis in the catalytic domain of F(1) is coupled via a rotary mechanism of the central stalk subunits to proton translocation. In terms of biological role, this protein is part of the stalk that links CF(0) to CF(1). It either transmits conformational changes from CF(0) to CF(1) or is implicated in proton conduction. This chain is ATP synthase subunit delta, found in Paracoccus denitrificans (strain Pd 1222).